Reading from the N-terminus, the 1033-residue chain is MGAAGLLGVFLALVAPGVLGISCGSPPPILNGRISYYSTPIAVGTVIRYSCSGTFRLIGEKSLLCITKDKVDGTWDKPAPKCEYFNKYSSCPEPIVPGGYKIRGSTPYRHGDSVTFACKTNFSMNGNKSVWCQANNMWGPTRLPTCVSVFPLECPALPMIHNGHHTSENVGSIAPGLSVTYSCESGYLLVGEKIINCLSSGKWSAVPPTCEEARCKSLGRFPNGKVKEPPILRVGVTANFFCDEGYRLQGPPSSRCVIAGQGVAWTKMPVCEEIFCPSPPPILNGRHIGNSLANVSYGSIVTYTCDPDPEEGVNFILIGESTLRCTVDSQKTGTWSGPAPRCELSTSAVQCPHPQILRGRMVSGQKDRYTYNDTVIFACMFGFTLKGSKQIRCNAQGTWEPSAPVCEKECQAPPNILNGQKEDRHMVRFDPGTSIKYSCNPGYVLVGEESIQCTSEGVWTPPVPQCKVAACEATGRQLLTKPQHQFVRPDVNSSCGEGYKLSGSVYQECQGTIPWFMEIRLCKEITCPPPPVIYNGAHTGSSLEDFPYGTTVTYTCNPGPERGVEFSLIGESTIRCTSNDQERGTWSGPAPLCKLSLLAVQCSHVHIANGYKISGKEAPYFYNDTVTFKCYSGFTLKGSSQIRCKADNTWDPEIPVCEKETCQHVRQSLQELPAGSRVELVNTSCQDGYQLTGHAYQMCQDAENGIWFKKIPLCKVIHCHPPPVIVNGKHTGMMAENFLYGNEVSYECDQGFYLLGEKKLQCRSDSKGHGSWSGPSPQCLRSPPVTRCPNPEVKHGYKLNKTHSAYSHNDIVYVDCNPGFIMNGSRVIRCHTDNTWVPGVPTCIKKAFIGCPPPPKTPNGNHTGGNIARFSPGMSILYSCDQGYLLVGEALLLCTHEGTWSQPAPHCKEVNCSSPADMDGIQKGLEPRKMYQYGAVVTLECEDGYMLEGSPQSQCQSDHQWNPPLAVCRSRSLAPVLCGIAAGLILLTFLIVITLYVISKHRARNYYTDTSQKEAFHLEAREVYSVDPYNPAS.

An N-terminal signal peptide occupies residues 1–20; that stretch reads MGAAGLLGVFLALVAPGVLG. 15 Sushi domains span residues 21-84, 89-148, 152-212, 213-273, 274-344, 349-408, 409-468, 469-524, 525-595, 600-659, 660-716, 717-781, 786-845, 849-909, and 910-970; these read ISCG…KCEY, SSCP…TCVS, LECP…TCEE, ARCK…VCEE, IFCP…RCEL, VQCP…VCEK, ECQA…QCKV, AACE…LCKE, ITCP…LCKL, VQCS…VCEK, ETCQ…LCKV, IHCH…QCLR, TRCP…TCIK, IGCP…HCKE, and VNCS…VCRS. The Extracellular segment spans residues 21–971; that stretch reads ISCGSPPPIL…NPPLAVCRSR (951 aa). 28 cysteine pairs are disulfide-bonded: cysteine 23–cysteine 65, cysteine 51–cysteine 82, cysteine 91–cysteine 132, cysteine 118–cysteine 146, cysteine 154–cysteine 197, cysteine 183–cysteine 210, cysteine 215–cysteine 256, cysteine 242–cysteine 271, cysteine 276–cysteine 325, cysteine 305–cysteine 342, cysteine 351–cysteine 393, cysteine 379–cysteine 406, cysteine 410–cysteine 453, cysteine 439–cysteine 466, cysteine 471–cysteine 509, cysteine 495–cysteine 522, cysteine 527–cysteine 576, cysteine 556–cysteine 593, cysteine 602–cysteine 644, cysteine 630–cysteine 657, cysteine 662–cysteine 699, cysteine 685–cysteine 714, cysteine 719–cysteine 762, cysteine 748–cysteine 779, cysteine 788–cysteine 830, cysteine 816–cysteine 843, cysteine 851–cysteine 894, and cysteine 880–cysteine 907. N-linked (GlcNAc...) asparagine glycosylation is found at asparagine 121 and asparagine 127. Asparagine 294 is a glycosylation site (N-linked (GlcNAc...) asparagine). Asparagine 372 is a glycosylation site (N-linked (GlcNAc...) asparagine). N-linked (GlcNAc...) asparagine glycosylation occurs at asparagine 492. N-linked (GlcNAc...) asparagine glycosylation occurs at asparagine 623. N-linked (GlcNAc...) asparagine glycosylation occurs at asparagine 682. 3 N-linked (GlcNAc...) asparagine glycosylation sites follow: asparagine 800, asparagine 823, and asparagine 861. N-linked (GlcNAc...) asparagine glycosylation is present at asparagine 911. 2 disulfides stabilise this stretch: cysteine 912/cysteine 955 and cysteine 941/cysteine 968. The helical transmembrane segment at 972 to 999 threads the bilayer; it reads SLAPVLCGIAAGLILLTFLIVITLYVIS. Topologically, residues 1000–1033 are cytoplasmic; sequence KHRARNYYTDTSQKEAFHLEAREVYSVDPYNPAS.

It belongs to the receptors of complement activation (RCA) family. As to quaternary structure, interacts (via Sushi domain 1 and 2) with C3. Interacts with CD19. Part of a complex composed of CD19, CR2/CD21, CD81 and IFITM1/CD225 in the membrane of mature B-cells. Interacts (via Sushi domain 1 and 2) with FCER2 (via the C-terminus). Interacts with CD23. Interacts with FCRL5. Interacts with CR1. Interacts with INFNA1. (Microbial infection) Interacts with Epstein-Barr virus gp350 protein. As to expression, mature B-lymphocytes, T-lymphocytes, pharyngeal epithelial cells, astrocytes and follicular dendritic cells of the spleen.

The protein localises to the cell membrane. Functionally, serves as a receptor for various ligands including complement component CD3d, HNRNPU OR IFNA1. When C3d is bound to antigens, attaches to C3d on B-cell surface and thereby facilitates the recognition and uptake of antigens by B-cells. This interaction enhances B-cell activation and subsequent immune responses. Forms a complex with several partners on the surface of B-cells including CD19, FCRL5 and CD81, to form the B-cell coreceptor complex that plays a crucial role in B-cell activation and signaling. Also induces specific intracellular signaling separately from the BCR and CD19 by activating the tyrosine kinase SRC, which then phosphorylates nucleolin/NCL and triggers AKT and GSK3 kinase activities in a SYK/CD19-independent manner. Acts as a ligand for CD23 (FcepsilonRII), a low-affinity receptor for IgE, which is expressed on B-cells and other immune cells, and thus participates in the regulation of IgE production. In terms of biological role, (Microbial infection) Acts as a receptor for Epstein-Barr virus. The sequence is that of Complement receptor type 2 (CR2) from Homo sapiens (Human).